The chain runs to 77 residues: Adipokinetic prohormone type 3 (77 aa).

The signal sequence occupies residues 1-22 (MQVRAVLVLAVVALVAVATSRA). At glutamine 23 the chain carries Pyrrolidone carboxylic acid. Tryptophan amide is present on tryptophan 30.

It belongs to the AKH/HRTH/RPCH family.

It is found in the secreted. In terms of biological role, this hormone, released from cells in the corpora cardiaca, causes release of diglycerides from the fat body and stimulation of muscles to use these diglycerides as an energy source during energy-demanding processes. The chain is Adipokinetic prohormone type 3 from Locusta migratoria (Migratory locust).